The chain runs to 791 residues: Probable phosphoketolase (791 aa).

This sequence belongs to the XFP family. The cofactor is thiamine diphosphate.

The chain is Probable phosphoketolase from Chlorobaculum tepidum (strain ATCC 49652 / DSM 12025 / NBRC 103806 / TLS) (Chlorobium tepidum).